A 118-amino-acid chain; its full sequence is Ribonuclease P protein component (118 aa).

It belongs to the RnpA family. As to quaternary structure, consists of a catalytic RNA component (M1 or rnpB) and a protein subunit.

The enzyme catalyses Endonucleolytic cleavage of RNA, removing 5'-extranucleotides from tRNA precursor.. RNaseP catalyzes the removal of the 5'-leader sequence from pre-tRNA to produce the mature 5'-terminus. It can also cleave other RNA substrates such as 4.5S RNA. The protein component plays an auxiliary but essential role in vivo by binding to the 5'-leader sequence and broadening the substrate specificity of the ribozyme. The chain is Ribonuclease P protein component from Rickettsia conorii (strain ATCC VR-613 / Malish 7).